The following is a 599-amino-acid chain: Peptidyl-Asp metalloendopeptidase (599 aa).

An N-terminal signal peptide occupies residues 1-20 (MKKSLLCSTLALAVASAAQA). His164 provides a ligand contact to Zn(2+). The active site involves Glu165. Zn(2+) contacts are provided by His168 and His174. The tract at residues 265-285 (PTKVPGTVNPGSGGDTPTPPD) is disordered. One can recognise a CBM-cenC domain in the interval 458–583 (YDFESGIGGW…KRAELMILSG (126 aa)).

It belongs to the peptidase M72 family. Interacts with BamI, the product of its coregulated adjacent gene, which inhibits its protease activity. Zn(2+) serves as cofactor. Made as a membrane-associated pre-pro-protein, which is exported to the periplasm with removal of the signal peptide, leading to a protein with a molecular mass of 65 kDa, that likely contains the metzincin domain plus tandem carbohydrate-binding domains. Undergoes processing during export to the extracellular milieu, probably by autocatalysis, yielding a (mature length) 25 kDa protein that most likely corresponds to the metzincin domain only.

The protein resides in the secreted. The enzyme catalyses Cleavage of Xaa-|-Asp, Xaa-|-Glu and Xaa-|-cysteic acid bonds.. Its activity is regulated as follows. Is inhibited by BamI, the product of its coregulated adjacent gene. In terms of biological role, metalloprotease with endopeptidase activity. Specifically cleaves on the N-terminal side of aspartyl, glutamyl and cysteic acid residues. Mep72 appears to be a secreted biofilm-specific regulator that affects the processing of a very specific subset of virulence factors exported by the type III secretion machinery as well as flagellar proteins. Binds directly to ExoS and PcrV and affects the processing of these proteins in the biofilm secretome, but contrary to expectation, Mep72 seems to protect these targets against proteolytic processing/degradation. The chain is Peptidyl-Asp metalloendopeptidase from Pseudomonas aeruginosa (strain ATCC 15692 / DSM 22644 / CIP 104116 / JCM 14847 / LMG 12228 / 1C / PRS 101 / PAO1).